Here is a 121-residue protein sequence, read N- to C-terminus: Small ribosomal subunit protein uS13 (121 aa).

The disordered stretch occupies residues 98 to 121; that stretch reads RGQKTRNNAHTVKGKPKSIAGKKK. The span at 109-121 shows a compositional bias: basic residues; sequence VKGKPKSIAGKKK.

Belongs to the universal ribosomal protein uS13 family. Part of the 30S ribosomal subunit. Forms a loose heterodimer with protein S19. Forms two bridges to the 50S subunit in the 70S ribosome.

Located at the top of the head of the 30S subunit, it contacts several helices of the 16S rRNA. In the 70S ribosome it contacts the 23S rRNA (bridge B1a) and protein L5 of the 50S subunit (bridge B1b), connecting the 2 subunits; these bridges are implicated in subunit movement. Contacts the tRNAs in the A and P-sites. The protein is Small ribosomal subunit protein uS13 of Phytoplasma australiense.